A 387-amino-acid chain; its full sequence is 8-amino-7-oxononanoate synthase (387 aa).

Arg-31 and Arg-38 together coordinate substrate. 118-119 (GY) contributes to the pyridoxal 5'-phosphate binding site. His-143 serves as a coordination point for substrate. Pyridoxal 5'-phosphate contacts are provided by residues Ser-191, 216 to 219 (DDAH), and 236 to 239 (TLSK). Lys-239 carries the post-translational modification N6-(pyridoxal phosphate)lysine. Thr-348 lines the substrate pocket.

This sequence belongs to the class-II pyridoxal-phosphate-dependent aminotransferase family. BioF subfamily. As to quaternary structure, homodimer. It depends on pyridoxal 5'-phosphate as a cofactor.

The catalysed reaction is 6-carboxyhexanoyl-[ACP] + L-alanine + H(+) = (8S)-8-amino-7-oxononanoate + holo-[ACP] + CO2. The protein operates within cofactor biosynthesis; biotin biosynthesis. Catalyzes the decarboxylative condensation of pimeloyl-[acyl-carrier protein] and L-alanine to produce 8-amino-7-oxononanoate (AON), [acyl-carrier protein], and carbon dioxide. The polypeptide is 8-amino-7-oxononanoate synthase (Methylorubrum populi (strain ATCC BAA-705 / NCIMB 13946 / BJ001) (Methylobacterium populi)).